The primary structure comprises 222 residues: Glutathione S-transferase A1 (222 aa).

N-acetylmethionine is present on M1. An N-acetylalanine; in Glutathione S-transferase A1, N-terminally processed modification is found at A2. One can recognise a GST N-terminal domain in the interval 3 to 83; it reads EKPKLHYFNA…YIASKYNLYG (81 aa). K4 carries the post-translational modification N6-succinyllysine. Glutathione is bound by residues Y9, R45, 54–55, and 67–68; these read QV and QT. Residues 85–207 form the GST C-terminal domain; sequence DIKERALIDM…LQPGSPRKPP (123 aa).

This sequence belongs to the GST superfamily. Alpha family. In terms of assembly, homodimer or heterodimer of GSTA1 and GSTA2. As to expression, liver.

It localises to the cytoplasm. It catalyses the reaction RX + glutathione = an S-substituted glutathione + a halide anion + H(+). The catalysed reaction is prostaglandin A2 + glutathione = prostaglandin A2-S-(R)-glutathione. It carries out the reaction prostaglandin J2 + glutathione = prostaglandin J2-S-(R)-glutathione. The enzyme catalyses (13S)-hydroperoxy-(9Z,11E)-octadecadienoate + 2 glutathione = (13S)-hydroxy-(9Z,11E)-octadecadienoate + glutathione disulfide + H2O. It catalyses the reaction androst-5-ene-3,17-dione = androst-4-ene-3,17-dione. With respect to regulation, the isomerase activity is inhibited by S-methylglutathione (GSMe). Glutathione S-transferase that catalyzes the nucleophilic attack of the sulfur atom of glutathione on the electrophilic groups of a wide range of exogenous and endogenous compounds. Involved in the formation of glutathione conjugates of both prostaglandin A2 (PGA2) and prostaglandin J2 (PGJ2). It also catalyzes the isomerization of D5-androstene-3,17-dione (AD) into D4-androstene-3,17-dione and may therefore play an important role in hormone biosynthesis. Through its glutathione-dependent peroxidase activity toward the fatty acid hydroperoxide (13S)-hydroperoxy-(9Z,11E)-octadecadienoate/13-HPODE it is also involved in the metabolism of oxidized linoleic acid. The chain is Glutathione S-transferase A1 (GSTA1) from Homo sapiens (Human).